Reading from the N-terminus, the 189-residue chain is Protein CotJC (189 aa).

It belongs to the manganese catalase family.

The cotJ operon proteins affect spore coat composition. They are either required for the normal formation of the inner layers of the coat or are themselves structural components of the coat. This Bacillus subtilis (strain 168) protein is Protein CotJC (cotJC).